An 851-amino-acid chain; its full sequence is DNA mismatch repair protein MutS (851 aa).

ATP is bound at residue 602-609 (GPNMSGKS).

This sequence belongs to the DNA mismatch repair MutS family.

Its function is as follows. This protein is involved in the repair of mismatches in DNA. It is possible that it carries out the mismatch recognition step. This protein has a weak ATPase activity. This is DNA mismatch repair protein MutS from Streptococcus equi subsp. equi (strain 4047).